Here is an 88-residue protein sequence, read N- to C-terminus: Putative septation protein SpoVG (88 aa).

This sequence belongs to the SpoVG family.

Its function is as follows. Could be involved in septation. The sequence is that of Putative septation protein SpoVG from Caldicellulosiruptor saccharolyticus (strain ATCC 43494 / DSM 8903 / Tp8T 6331).